The sequence spans 103 residues: Pyrimidine/purine nucleoside phosphorylase (103 aa).

Belongs to the nucleoside phosphorylase PpnP family.

The enzyme catalyses a purine D-ribonucleoside + phosphate = a purine nucleobase + alpha-D-ribose 1-phosphate. It carries out the reaction adenosine + phosphate = alpha-D-ribose 1-phosphate + adenine. The catalysed reaction is cytidine + phosphate = cytosine + alpha-D-ribose 1-phosphate. It catalyses the reaction guanosine + phosphate = alpha-D-ribose 1-phosphate + guanine. The enzyme catalyses inosine + phosphate = alpha-D-ribose 1-phosphate + hypoxanthine. It carries out the reaction thymidine + phosphate = 2-deoxy-alpha-D-ribose 1-phosphate + thymine. The catalysed reaction is uridine + phosphate = alpha-D-ribose 1-phosphate + uracil. It catalyses the reaction xanthosine + phosphate = alpha-D-ribose 1-phosphate + xanthine. Its function is as follows. Catalyzes the phosphorolysis of diverse nucleosides, yielding D-ribose 1-phosphate and the respective free bases. Can use uridine, adenosine, guanosine, cytidine, thymidine, inosine and xanthosine as substrates. Also catalyzes the reverse reactions. The sequence is that of Pyrimidine/purine nucleoside phosphorylase from Citrifermentans bemidjiense (strain ATCC BAA-1014 / DSM 16622 / JCM 12645 / Bem) (Geobacter bemidjiensis).